A 74-amino-acid polypeptide reads, in one-letter code: Defensin (74 aa).

The first 21 residues, 1–21 (MRGIYICLVFVLVCGLVSGLA), serve as a signal peptide directing secretion. A propeptide spanning residues 22–34 (DVPAESEMAHLRV) is cleaved from the precursor. 3 cysteine pairs are disulfide-bonded: C40/C61, C47/C69, and C51/C71.

In terms of tissue distribution, expressed in the hemocytes, fat body and ovaries.

Its subcellular location is the secreted. In terms of biological role, antibacterial peptide mostly active against Gram-positive bacteria. The polypeptide is Defensin (Rhipicephalus microplus (Cattle tick)).